Here is a 191-residue protein sequence, read N- to C-terminus: Neuronal calcium sensor 1 (191 aa).

A lipid anchor (N-myristoyl glycine) is attached at Gly2. 4 consecutive EF-hand domains span residues 24 to 59 (ESEI…FPFG), 60 to 95 (DPSK…TSRG), 96 to 131 (TVEE…IYRM), and 144 to 179 (TPEK…DPTI). The Ca(2+) site is built by Asp73, Asn75, Asp77, Glu84, Asp109, Asp111, Asp113, Tyr115, Glu120, Asp157, Asn159, Asp161, Gln163, and Glu168.

It belongs to the recoverin family.

It localises to the perikaryon. The protein localises to the cell projection. The protein resides in the growth cone. Its function is as follows. Neuronal calcium sensor, regulator of G protein-coupled receptor phosphorylation in a calcium dependent manner. Regulates neurite extension and branching by activity-dependent Ca(2+) influx in growth cones. This Lymnaea stagnalis (Great pond snail) protein is Neuronal calcium sensor 1.